The following is a 518-amino-acid chain: Subtilisin-like protease 1 (518 aa).

The signal sequence occupies residues 1 to 19; it reads MGVFRFISISLAAVSAANA. Positions 20 to 116 are excised as a propeptide; that stretch reads AQILSMPHAQ…VEPDTIISVH (97 aa). Residues 34–115 enclose the Inhibitor I9 domain; sequence SYIVMMKDDT…FVEPDTIISV (82 aa). Residues 126 to 400 enclose the Peptidase S8 domain; sequence SWGLARISNP…NVLINNGGAK (275 aa). Active-site charge relay system residues include Asp158 and His190. Positions 175–198 are disordered; sequence GSNQVNDGDDRDGSGHGTHTSGTM. Residues Asn233 and Asn251 are each glycosylated (N-linked (GlcNAc...) asparagine). Over residues 282-294 the composition is skewed to polar residues; sequence NDNQDAQSSSPAS. Residues 282–312 form a disordered region; it reads NDNQDAQSSSPASEPSVCTVGSSAEDDSRSS. Ser345 functions as the Charge relay system in the catalytic mechanism. The span at 378-394 shows a compositional bias: polar residues; sequence TSSITDAGPGTPTNVLI. Residues 378–496 are disordered; the sequence is TSSITDAGPG…PYPGGDNFDF (119 aa). Composition is skewed to pro residues over residues 405–470 and 478–487; these read NPNP…PGEP and APAPQHPHTP.

The protein belongs to the peptidase S8 family.

The protein localises to the secreted. Functionally, secreted subtilisin-like serine protease with keratinolytic activity that contributes to pathogenicity. The protein is Subtilisin-like protease 1 (SUB1) of Trichophyton verrucosum (strain HKI 0517).